We begin with the raw amino-acid sequence, 384 residues long: tRNA-specific 2-thiouridylase MnmA (384 aa).

The segment at 1-26 is disordered; sequence MDEGIRASGGIRACQTGKQKQGRKRP. ATP contacts are provided by residues 36–43 and Met-62; that span reads GMSGGVDS. The interaction with target base in tRNA stretch occupies residues 122 to 124; sequence NPD. Cys-127 acts as the Nucleophile in catalysis. A disulfide bridge links Cys-127 with Cys-223. Gly-151 contacts ATP. The interaction with tRNA stretch occupies residues 173–175; that stretch reads KDQ. The active-site Cysteine persulfide intermediate is Cys-223. The interval 334 to 335 is interaction with tRNA; it reads RY.

It belongs to the MnmA/TRMU family.

Its subcellular location is the cytoplasm. It carries out the reaction S-sulfanyl-L-cysteinyl-[protein] + uridine(34) in tRNA + AH2 + ATP = 2-thiouridine(34) in tRNA + L-cysteinyl-[protein] + A + AMP + diphosphate + H(+). Its function is as follows. Catalyzes the 2-thiolation of uridine at the wobble position (U34) of tRNA, leading to the formation of s(2)U34. This is tRNA-specific 2-thiouridylase MnmA from Chromobacterium violaceum (strain ATCC 12472 / DSM 30191 / JCM 1249 / CCUG 213 / NBRC 12614 / NCIMB 9131 / NCTC 9757 / MK).